Consider the following 377-residue polypeptide: MGTQGKVIKCKAAIAWKTGSPLCIEEIEVSPPKACEVRIQVIATCVCPTDINATDPKKKALFPVVLGHECAGIVESVGPGVTNFKPGDKVIPFFAPQCKRCKLCLSPLTNLCGKLRNFKYPTIDQELMEDRTSRFTCKGRSIYHFMGVSSFSQYTVVSEANLARVDDEANLERVCLIGCGFSSGYGAAINTAKVTPSSTCAVFGLGCVGLSAIIGCKIAGASRIIAIDINGEKFPKAKALGATDCLNPRELDKPVQDVITELTAGGVDYSLDCAGTAQTLKAAVDCTVLGWGSCTVVGAKVDKMTIPTVDVILGRSINGTFFGGWKSVDSVPNLVSDYKNKKFDLDLLVTHALPFESINDAIDLMKEGKSIRTILTF.

Cys-47 contributes to the Zn(2+) binding site. Thr-49 lines the NAD(+) pocket. Residues His-68, Cys-98, Cys-101, Cys-104, Cys-112, and Cys-179 each contribute to the Zn(2+) site. NAD(+)-binding positions include Gly-204–Gly-209, Asp-228, Lys-233, Val-297–Ala-299, Thr-320–Phe-322, and Arg-372.

This sequence belongs to the zinc-containing alcohol dehydrogenase family. Class-II subfamily. In terms of assembly, dimer. It depends on Zn(2+) as a cofactor. As to expression, liver specific.

It localises to the cytoplasm. The enzyme catalyses all-trans-retinol + NAD(+) = all-trans-retinal + NADH + H(+). It catalyses the reaction 9-cis-retinol + NAD(+) = 9-cis-retinal + NADH + H(+). It carries out the reaction 20-hydroxy-(5Z,8Z,11Z,14Z)-eicosatetraenoate + NAD(+) = 20-oxo-(5Z,8Z,11Z,14Z)-eicosatetraenoate + NADH + H(+). The catalysed reaction is 20-oxo-(5Z,8Z,11Z,14Z)-eicosatetraenoate + NAD(+) + H2O = (5Z,8Z,11Z,14Z)-eicosatetraenedioate + NADH + 2 H(+). The enzyme catalyses 1,4-benzoquinone + NADH + H(+) = hydroquinone + NAD(+). Oxidation of 20-HETE is inhibited by low concentrations of N-heptylformamide. Oxidation of 20-HETE is a decreased by 55-65% by either all-trans-retinol or all-trans-retinoic acid. Strongly inhibited by omega-hydroxy fatty acids. Its function is as follows. Catalyzes the NAD-dependent oxidation of either all-trans-retinol or 9-cis-retinol. Also oxidizes long chain omega-hydroxy fatty acids, such as 20-HETE, producing both the intermediate aldehyde, 20-oxoarachidonate and the end product, a dicarboxylic acid, (5Z,8Z,11Z,14Z)-eicosatetraenedioate. Also catalyzes the reduction of benzoquinones. This chain is All-trans-retinol dehydrogenase [NAD(+)] ADH4, found in Mus musculus (Mouse).